The following is a 226-amino-acid chain: Uracil phosphoribosyltransferase (226 aa).

36–40 (KGLVK) is a GTP binding site. 5-phospho-alpha-D-ribose 1-diphosphate is bound by residues Arg-86, Arg-111, and 145 to 153 (DPMLATGST). Residues Ile-211 and 216 to 218 (GDA) contribute to the uracil site. Asp-217 lines the 5-phospho-alpha-D-ribose 1-diphosphate pocket.

This sequence belongs to the UPRTase family. Mg(2+) serves as cofactor.

It carries out the reaction UMP + diphosphate = 5-phospho-alpha-D-ribose 1-diphosphate + uracil. The protein operates within pyrimidine metabolism; UMP biosynthesis via salvage pathway; UMP from uracil: step 1/1. With respect to regulation, allosterically activated by GTP. Its function is as follows. Catalyzes the conversion of uracil and 5-phospho-alpha-D-ribose 1-diphosphate (PRPP) to UMP and diphosphate. The protein is Uracil phosphoribosyltransferase of Haloquadratum walsbyi (strain DSM 16790 / HBSQ001).